Consider the following 331-residue polypeptide: Probable allantoicase (331 aa).

This sequence belongs to the allantoicase family.

It catalyses the reaction allantoate + H2O = (S)-ureidoglycolate + urea. The protein operates within nitrogen metabolism; (S)-allantoin degradation; (S)-ureidoglycolate from allantoate (aminidohydrolase route): step 1/1. The polypeptide is Probable allantoicase (Pseudomonas fluorescens (strain Pf0-1)).